Here is a 396-residue protein sequence, read N- to C-terminus: Elongation factor Tu (396 aa).

The tr-type G domain maps to 10–206 (KPHCNIGTIG…NVDEYIPQPE (197 aa)). Residues 19–26 (GHVDHGKT) form a G1 region. 19–26 (GHVDHGKT) is a binding site for GTP. A Mg(2+)-binding site is contributed by Thr26. The tract at residues 60–64 (GITIS) is G2. Residues 81–84 (DCPG) form a G3 region. Residues 81–85 (DCPGH) and 136–139 (NKCD) each bind GTP. The G4 stretch occupies residues 136 to 139 (NKCD). Residues 174 to 176 (SAL) are G5.

It belongs to the TRAFAC class translation factor GTPase superfamily. Classic translation factor GTPase family. EF-Tu/EF-1A subfamily. Monomer.

It localises to the cytoplasm. It catalyses the reaction GTP + H2O = GDP + phosphate + H(+). In terms of biological role, GTP hydrolase that promotes the GTP-dependent binding of aminoacyl-tRNA to the A-site of ribosomes during protein biosynthesis. This chain is Elongation factor Tu, found in Bradyrhizobium sp. (strain BTAi1 / ATCC BAA-1182).